Reading from the N-terminus, the 154-residue chain is MAASDIAGRVEEMARPLAERKGLELVEVQYVTEGGRRYLRVFLDKPGGINLDDCEAVSRELDRALDDVDFIPHSYVLEVSSPGLERPLKRAEDYVRFKGRLVQINTYAPLNGRKKFSGRLMGSGEEGVTILLGEHELATIPWDQISKARLAVEF.

It belongs to the RimP family.

The protein localises to the cytoplasm. Its function is as follows. Required for maturation of 30S ribosomal subunits. This is Ribosome maturation factor RimP from Desulforudis audaxviator (strain MP104C).